The chain runs to 296 residues: Urease accessory protein UreD (296 aa).

Belongs to the UreD family. UreD, UreF and UreG form a complex that acts as a GTP-hydrolysis-dependent molecular chaperone, activating the urease apoprotein by helping to assemble the nickel containing metallocenter of UreC. The UreE protein probably delivers the nickel.

It localises to the cytoplasm. Functionally, required for maturation of urease via the functional incorporation of the urease nickel metallocenter. In Nitrosococcus oceani (strain ATCC 19707 / BCRC 17464 / JCM 30415 / NCIMB 11848 / C-107), this protein is Urease accessory protein UreD.